The following is an 89-amino-acid chain: Large ribosomal subunit protein bL27 (89 aa).

Positions 1–24 are disordered; it reads MAHKKGTGSTRNGRDSNSKRLGVK.

The protein belongs to the bacterial ribosomal protein bL27 family.

This is Large ribosomal subunit protein bL27 from Synechococcus sp. (strain WH7803).